Reading from the N-terminus, the 345-residue chain is S-adenosylmethionine:tRNA ribosyltransferase-isomerase (345 aa).

It belongs to the QueA family. As to quaternary structure, monomer.

It localises to the cytoplasm. It carries out the reaction 7-aminomethyl-7-carbaguanosine(34) in tRNA + S-adenosyl-L-methionine = epoxyqueuosine(34) in tRNA + adenine + L-methionine + 2 H(+). Its pathway is tRNA modification; tRNA-queuosine biosynthesis. Its function is as follows. Transfers and isomerizes the ribose moiety from AdoMet to the 7-aminomethyl group of 7-deazaguanine (preQ1-tRNA) to give epoxyqueuosine (oQ-tRNA). The protein is S-adenosylmethionine:tRNA ribosyltransferase-isomerase of Acinetobacter baumannii (strain AB0057).